The primary structure comprises 297 residues: TGF-beta receptor type-2 (297 aa).

Residues 1 to 23 form the signal peptide; sequence MGRGLLGGLWPLHVVLWTRIAST. Over 24 to 166 the chain is Extracellular; it reads IPPHVPKSVN…NPDLLLVIFQ (143 aa). Intrachain disulfides connect cysteine 51–cysteine 84, cysteine 54–cysteine 71, cysteine 61–cysteine 67, cysteine 77–cysteine 101, cysteine 121–cysteine 136, and cysteine 138–cysteine 143. N-linked (GlcNAc...) asparagine glycans are attached at residues asparagine 70 and asparagine 94. The helical transmembrane segment at 167–187 threads the bilayer; the sequence is VTGVSLLPPLGIAIAVIITFY. Topologically, residues 188–297 are cytoplasmic; it reads CYRVHRQQKL…KTEKDIFSDL (110 aa). In terms of domain architecture, Protein kinase spans 244–297; the sequence is IELDTLVGKGRFAEVYKAKLRQNTSEQFETVAVKIFPYEEYASWKTEKDIFSDL. ATP is bound by residues 250–258 and lysine 277; that span reads VGKGRFAEV.

The protein belongs to the protein kinase superfamily. TKL Ser/Thr protein kinase family. TGFB receptor subfamily. As to quaternary structure, homodimer. Heterohexamer; TGFB1, TGFB2 and TGFB3 homodimeric ligands assemble a functional receptor composed of two TGFBR1 and TGFBR2 heterodimers to form a ligand-receptor heterohexamer. The respective affinity of TGFRB1 and TGFRB2 for the ligands may modulate the kinetics of assembly of the receptor and may explain the different biological activities of TGFB1, TGFB2 and TGFB3. Component of a complex composed of TSC22D1 (via N-terminus), TGFBR1 and TGFBR2; the interaction between TSC22D1 and TGFBR1 is inhibited by SMAD7 and promoted by TGFB1. Interacts with DAXX. Interacts with DYNLT4. Interacts with ZFYVE9; ZFYVE9 recruits SMAD2 and SMAD3 to the TGF-beta receptor. Interacts with and is activated by SCUBE3; this interaction does not affect TGFB1-binding to TGFBR2. Interacts with VPS39; this interaction is independent of the receptor kinase activity and of the presence of TGF-beta. Interacts with CLU. It depends on Mg(2+) as a cofactor. Mn(2+) serves as cofactor. Phosphorylated on a Ser/Thr residue in the cytoplasmic domain.

Its subcellular location is the cell membrane. The protein localises to the membrane raft. The catalysed reaction is L-threonyl-[receptor-protein] + ATP = O-phospho-L-threonyl-[receptor-protein] + ADP + H(+). The enzyme catalyses L-seryl-[receptor-protein] + ATP = O-phospho-L-seryl-[receptor-protein] + ADP + H(+). Its function is as follows. Transmembrane serine/threonine kinase forming with the TGF-beta type I serine/threonine kinase receptor, TGFBR1, the non-promiscuous receptor for the TGF-beta cytokines TGFB1, TGFB2 and TGFB3. Transduces the TGFB1, TGFB2 and TGFB3 signal from the cell surface to the cytoplasm and is thus regulating a plethora of physiological and pathological processes including cell cycle arrest in epithelial and hematopoietic cells, control of mesenchymal cell proliferation and differentiation, wound healing, extracellular matrix production, immunosuppression and carcinogenesis. The formation of the receptor complex composed of 2 TGFBR1 and 2 TGFBR2 molecules symmetrically bound to the cytokine dimer results in the phosphorylation and the activation of TGFRB1 by the constitutively active TGFBR2. Activated TGFBR1 phosphorylates SMAD2 which dissociates from the receptor and interacts with SMAD4. The SMAD2-SMAD4 complex is subsequently translocated to the nucleus where it modulates the transcription of the TGF-beta-regulated genes. This constitutes the canonical SMAD-dependent TGF-beta signaling cascade. Also involved in non-canonical, SMAD-independent TGF-beta signaling pathways. The sequence is that of TGF-beta receptor type-2 (TGFBR2) from Sus scrofa (Pig).